A 410-amino-acid chain; its full sequence is Elongation factor Tu, chloroplastic (410 aa).

The 206-residue stretch at 10-215 (KPHVNIGTIG…NVDSYIPTPE (206 aa)) folds into the tr-type G domain. Residues 19–26 (GHVDHGKT) are G1. 19–26 (GHVDHGKT) is a GTP binding site. Residue Thr26 participates in Mg(2+) binding. The segment at 61-65 (GITIN) is G2. Residues 82–85 (DCPG) are G3. GTP-binding positions include 82 to 86 (DCPGH) and 137 to 140 (NKKD). The tract at residues 137–140 (NKKD) is G4. Residues 175 to 177 (SAL) are G5.

It belongs to the TRAFAC class translation factor GTPase superfamily. Classic translation factor GTPase family. EF-Tu/EF-1A subfamily.

It is found in the plastid. It localises to the chloroplast. The catalysed reaction is GTP + H2O = GDP + phosphate + H(+). In terms of biological role, GTP hydrolase that promotes the GTP-dependent binding of aminoacyl-tRNA to the A-site of ribosomes during protein biosynthesis. In Oltmannsiellopsis viridis (Marine flagellate), this protein is Elongation factor Tu, chloroplastic (tufA).